Reading from the N-terminus, the 83-residue chain is Weak toxin DE-1 homolog 1 (83 aa).

The N-terminal stretch at 1 to 21 (MKPVLLTLVVVTIVCLDLGYT) is a signal peptide. Cystine bridges form between C24–C45, C38–C62, C64–C75, and C76–C81.

It belongs to the three-finger toxin family. Short-chain subfamily. Type I alpha-neurotoxin sub-subfamily. As to expression, expressed by the venom gland.

Its subcellular location is the secreted. Binds to muscle nicotinic acetylcholine receptor (nAChR) and inhibit acetylcholine from binding to the receptor, thereby impairing neuromuscular transmission. The polypeptide is Weak toxin DE-1 homolog 1 (Ophiophagus hannah (King cobra)).